We begin with the raw amino-acid sequence, 374 residues long: MYLKTLNLRQFRNYQDQKVEFTAAKTILVGNNAQGKSNLLEAVELLATLRSHRMTRDRDLVQEGEAIAQINATLERQTGVSDLTLTLRRNGRRSVALNGESIRRQMDFLGVLNAVQFSSLDLDLVRGGPEGRRNWLDTLLIQLEPVYAHILQQYNHVLRQRNAFLKRHVETLDATSLHSELAVWDAQLATTGTRVIRRRDRAIQRLAPIASAWHASISGSTEALQIKYLPNIPSEDNHPEEVQQAFLVKIQQRAIAELHQGTTLVGPHRDEIELTINQTPARQYGSQGQQRTLVLALKLAELQLIEEVVKEPPLLLLDDVLAELDLSRQNQLLDAIQDRFQTLITTTHLGSFDSQWLKSSQILFVKAGEIIPNL.

Position 30 to 37 (30 to 37 (GNNAQGKS)) interacts with ATP.

This sequence belongs to the RecF family.

It is found in the cytoplasm. The RecF protein is involved in DNA metabolism; it is required for DNA replication and normal SOS inducibility. RecF binds preferentially to single-stranded, linear DNA. It also seems to bind ATP. The chain is DNA replication and repair protein RecF from Nostoc punctiforme (strain ATCC 29133 / PCC 73102).